The chain runs to 226 residues: tRNA (guanine-N(7)-)-methyltransferase (226 aa).

The tract at residues 1–21 (MTHPQQPHGPLRSFGRLKSRP) is disordered. S-adenosyl-L-methionine is bound by residues Glu59, Glu84, Asp111, and Asp133. Asp133 is an active-site residue. Lys137 is a substrate binding site. The tract at residues 139 to 144 (RHNKRR) is interaction with RNA. Substrate is bound by residues Asp169 and 206 to 209 (TRYE).

This sequence belongs to the class I-like SAM-binding methyltransferase superfamily. TrmB family.

It catalyses the reaction guanosine(46) in tRNA + S-adenosyl-L-methionine = N(7)-methylguanosine(46) in tRNA + S-adenosyl-L-homocysteine. It participates in tRNA modification; N(7)-methylguanine-tRNA biosynthesis. Its function is as follows. Catalyzes the formation of N(7)-methylguanine at position 46 (m7G46) in tRNA. This chain is tRNA (guanine-N(7)-)-methyltransferase, found in Caulobacter sp. (strain K31).